The chain runs to 315 residues: ATP synthase gamma chain (315 aa).

It belongs to the ATPase gamma chain family. As to quaternary structure, F-type ATPases have 2 components, CF(1) - the catalytic core - and CF(0) - the membrane proton channel. CF(1) has five subunits: alpha(3), beta(3), gamma(1), delta(1), epsilon(1). CF(0) has three main subunits: a, b and c.

It localises to the cellular thylakoid membrane. Its function is as follows. Produces ATP from ADP in the presence of a proton gradient across the membrane. The gamma chain is believed to be important in regulating ATPase activity and the flow of protons through the CF(0) complex. The chain is ATP synthase gamma chain from Trichormus variabilis (strain ATCC 29413 / PCC 7937) (Anabaena variabilis).